Reading from the N-terminus, the 368-residue chain is Phosphoribosylaminoimidazole-succinocarboxamide synthase (368 aa).

The protein belongs to the SAICAR synthetase family.

It catalyses the reaction 5-amino-1-(5-phospho-D-ribosyl)imidazole-4-carboxylate + L-aspartate + ATP = (2S)-2-[5-amino-1-(5-phospho-beta-D-ribosyl)imidazole-4-carboxamido]succinate + ADP + phosphate + 2 H(+). Its pathway is purine metabolism; IMP biosynthesis via de novo pathway; 5-amino-1-(5-phospho-D-ribosyl)imidazole-4-carboxamide from 5-amino-1-(5-phospho-D-ribosyl)imidazole-4-carboxylate: step 1/2. The protein is Phosphoribosylaminoimidazole-succinocarboxamide synthase of Vibrio cholerae serotype O1 (strain ATCC 39315 / El Tor Inaba N16961).